The primary structure comprises 255 residues: Small ribosomal subunit protein uS2 (255 aa).

The tract at residues 231–255 (RLQTGAEEEFSTEGEEVVEETPAEA) is disordered. Acidic residues predominate over residues 236-255 (AEEEFSTEGEEVVEETPAEA).

It belongs to the universal ribosomal protein uS2 family.

The chain is Small ribosomal subunit protein uS2 from Citrifermentans bemidjiense (strain ATCC BAA-1014 / DSM 16622 / JCM 12645 / Bem) (Geobacter bemidjiensis).